Consider the following 327-residue polypeptide: Methionyl-tRNA formyltransferase (327 aa).

121–124 (SLLP) lines the (6S)-5,6,7,8-tetrahydrofolate pocket.

This sequence belongs to the Fmt family.

The catalysed reaction is L-methionyl-tRNA(fMet) + (6R)-10-formyltetrahydrofolate = N-formyl-L-methionyl-tRNA(fMet) + (6S)-5,6,7,8-tetrahydrofolate + H(+). In terms of biological role, attaches a formyl group to the free amino group of methionyl-tRNA(fMet). The formyl group appears to play a dual role in the initiator identity of N-formylmethionyl-tRNA by promoting its recognition by IF2 and preventing the misappropriation of this tRNA by the elongation apparatus. This Burkholderia pseudomallei (strain 668) protein is Methionyl-tRNA formyltransferase.